Reading from the N-terminus, the 369-residue chain is Putative glutamate--cysteine ligase 2-1 (369 aa).

This sequence belongs to the glutamate--cysteine ligase type 2 family. YbdK subfamily.

The catalysed reaction is L-cysteine + L-glutamate + ATP = gamma-L-glutamyl-L-cysteine + ADP + phosphate + H(+). Its function is as follows. ATP-dependent carboxylate-amine ligase which exhibits weak glutamate--cysteine ligase activity. This chain is Putative glutamate--cysteine ligase 2-1, found in Rhodococcus jostii (strain RHA1).